Reading from the N-terminus, the 1055-residue chain is MDS1 and EVI1 complex locus protein EVI1-A (1055 aa).

3 consecutive C2H2-type zinc fingers follow at residues 21–48, 75–97, and 103–125; these read YRCE…VTPH, HECK…LLSH, and YKCD…QMSH. The C2H2-type 4; degenerate zinc finger occupies 131–155; it reads YECENCSKQVFTDPSNLQRHIRSQH. 2 consecutive C2H2-type zinc fingers follow at residues 161 to 183 and 189 to 211; these read HACS…KHIH and FVCE…KRMH. The C2H2-type 7; atypical zinc finger occupies 218 to 240; sequence IKCKDCGQMFSTTSSLNKHRRFC. Disordered regions lie at residues 324 to 345, 372 to 423, and 531 to 621; these read PVKG…VNQP, FITE…SDKD, and VPLK…PELP. Over residues 332 to 345 the composition is skewed to polar residues; it reads EQSSKSQSPHVNQP. Residues 381-392 are compositionally biased toward basic and acidic residues; sequence RPHEKISDHSES. The span at 399 to 413 shows a compositional bias: polar residues; that stretch reads STPSGSDLETTSGSD. A Nuclear localization signal motif is present at residues 422-435; sequence KDKLKENGKLYKDK. The span at 531–566 shows a compositional bias: basic and acidic residues; it reads VPLKIEPESPKETKKVQKGKTESPFDLTTKRKEEKA. A CTBP-binding motif 1 motif is present at residues 554–558; it reads PFDLT. Residues 569-583 are compositionally biased toward polar residues; it reads NVPSKSGAPTSSNHD. The short motif at 585-589 is the CTBP-binding motif 2 element; sequence PLDLS. Positions 591–601 are enriched in polar residues; that stretch reads GSRSRAATTKQ. The span at 602–621 shows a compositional bias: basic and acidic residues; it reads TEPRKNHIFNEKKDMDPELP. 3 C2H2-type zinc fingers span residues 734-756, 762-785, and 791-813; these read YTCR…LRTH, YRCK…RNIH, and FKCH…LKKH. Disordered stretches follow at residues 813–837 and 922–957; these read HENG…GPIL and SVDE…EDFK. Positions 816-827 are enriched in polar residues; sequence GNLSGTAASSPH. Residues 944–954 show a composition bias toward acidic residues; the sequence is DDEDDDDDEEE.

As to quaternary structure, homooligomer. Interacts with ctbp. In terms of tissue distribution, expressed dynamically during embryonic development; in the developing pronephros, specific areas of the brain (forebrain, midbrain and hindbrain), and in the majority of the visceral arch, and head mesenchyme derived from neural crest cells. Within the pronephros, expressed in the ventroposterior region of the pronephros anlagen from stage 20 (and is absent from the splanchnic layer that forms the glomus), then expression becomes restricted to the distal tubule and duct by the tadpole stage. In adults, expressed in various tissues including kidney, lung, testis, spleen and stomach.

The protein localises to the nucleus. It localises to the nucleus speckle. Transcriptional repressor during pronephros development. Plays a role in regionalization of the pronephros; may promote formation of the distal tubule and duct over formation of the glomus and proximal tubule. The sequence is that of MDS1 and EVI1 complex locus protein EVI1-A (mecom-a) from Xenopus laevis (African clawed frog).